We begin with the raw amino-acid sequence, 179 residues long: MTRLKEIYKNEIMAGMQKKFGYKNEMQIPKLDKIVINMGVGEAKDNAKALEAAVKDMEIIAGQKAVITKARKSVANFKLREGVAIGCKVTLRGEKMYEFADRLINLALPRVRDFRGVNPNAFDGRGNYALGVKEQLIFPEIEYDKVDKVRGMDVIFVTTAKTDEEARELLTLFGMPFSK.

Belongs to the universal ribosomal protein uL5 family. In terms of assembly, part of the 50S ribosomal subunit; part of the 5S rRNA/L5/L18/L25 subcomplex. Contacts the 5S rRNA and the P site tRNA. Forms a bridge to the 30S subunit in the 70S ribosome.

Its function is as follows. This is one of the proteins that bind and probably mediate the attachment of the 5S RNA into the large ribosomal subunit, where it forms part of the central protuberance. In the 70S ribosome it contacts protein S13 of the 30S subunit (bridge B1b), connecting the 2 subunits; this bridge is implicated in subunit movement. Contacts the P site tRNA; the 5S rRNA and some of its associated proteins might help stabilize positioning of ribosome-bound tRNAs. The chain is Large ribosomal subunit protein uL5 from Lachnoclostridium phytofermentans (strain ATCC 700394 / DSM 18823 / ISDg) (Clostridium phytofermentans).